A 361-amino-acid polypeptide reads, in one-letter code: Phosphoserine aminotransferase (361 aa).

Arginine 43 contributes to the L-glutamate binding site. Residues 77–78 (AS), tryptophan 103, threonine 152, aspartate 172, and glutamine 195 each bind pyridoxal 5'-phosphate. Residue lysine 196 is modified to N6-(pyridoxal phosphate)lysine. Pyridoxal 5'-phosphate is bound at residue 237–238 (NT).

This sequence belongs to the class-V pyridoxal-phosphate-dependent aminotransferase family. SerC subfamily. In terms of assembly, homodimer. The cofactor is pyridoxal 5'-phosphate.

It localises to the cytoplasm. It catalyses the reaction O-phospho-L-serine + 2-oxoglutarate = 3-phosphooxypyruvate + L-glutamate. The enzyme catalyses 4-(phosphooxy)-L-threonine + 2-oxoglutarate = (R)-3-hydroxy-2-oxo-4-phosphooxybutanoate + L-glutamate. It participates in amino-acid biosynthesis; L-serine biosynthesis; L-serine from 3-phospho-D-glycerate: step 2/3. The protein operates within cofactor biosynthesis; pyridoxine 5'-phosphate biosynthesis; pyridoxine 5'-phosphate from D-erythrose 4-phosphate: step 3/5. Catalyzes the reversible conversion of 3-phosphohydroxypyruvate to phosphoserine and of 3-hydroxy-2-oxo-4-phosphonooxybutanoate to phosphohydroxythreonine. The chain is Phosphoserine aminotransferase from Desulfosudis oleivorans (strain DSM 6200 / JCM 39069 / Hxd3) (Desulfococcus oleovorans).